We begin with the raw amino-acid sequence, 235 residues long: uncharacterized protein (235 aa).

It to E.coli YbeU.

This is an uncharacterized protein from Escherichia coli (strain K12).